The following is a 403-amino-acid chain: Glyceraldehyde-3-phosphate dehydrogenase A, chloroplastic (403 aa).

The N-terminal 66 residues, 1 to 66 (MASSMLSATT…GGPRRAPTEA (66 aa)), are a transit peptide targeting the chloroplast. NADP(+) contacts are provided by residues 77-78 (RI), aspartate 102, and arginine 147. Residues 219 to 221 (SCT), threonine 250, arginine 265, 278 to 279 (TG), and arginine 301 contribute to the D-glyceraldehyde 3-phosphate site. Cysteine 220 acts as the Nucleophile in catalysis. Asparagine 383 lines the NADP(+) pocket.

The protein belongs to the glyceraldehyde-3-phosphate dehydrogenase family. As to quaternary structure, tetramer of either four A chains (GAPDH 2) or two A and two B chains (GAPDH 1).

It localises to the plastid. It is found in the chloroplast. The catalysed reaction is D-glyceraldehyde 3-phosphate + phosphate + NADP(+) = (2R)-3-phospho-glyceroyl phosphate + NADPH + H(+). The protein operates within carbohydrate biosynthesis; Calvin cycle. This chain is Glyceraldehyde-3-phosphate dehydrogenase A, chloroplastic (GAPA), found in Zea mays (Maize).